A 133-amino-acid polypeptide reads, in one-letter code: Probable mitochondrial pyruvate carrier 2 (133 aa).

3 consecutive transmembrane segments (helical) span residues 40–57 (VFFW…AGLA), 73–91 (ALFA…ITPI), and 100–116 (FFVM…IAHY).

The protein belongs to the mitochondrial pyruvate carrier (MPC) (TC 2.A.105) family.

It localises to the mitochondrion inner membrane. Its function is as follows. May mediate the uptake of pyruvate into mitochondria. This chain is Probable mitochondrial pyruvate carrier 2, found in Caenorhabditis elegans.